A 104-amino-acid chain; its full sequence is Large ribosomal subunit protein bL21 (104 aa).

The protein belongs to the bacterial ribosomal protein bL21 family. Part of the 50S ribosomal subunit. Contacts protein L20.

Its function is as follows. This protein binds to 23S rRNA in the presence of protein L20. This chain is Large ribosomal subunit protein bL21, found in Agrobacterium fabrum (strain C58 / ATCC 33970) (Agrobacterium tumefaciens (strain C58)).